Here is a 101-residue protein sequence, read N- to C-terminus: CRISPR-associated endoribonuclease Cas2 (101 aa).

Asp8 contacts Mg(2+).

This sequence belongs to the CRISPR-associated endoribonuclease Cas2 protein family. In terms of assembly, homodimer, forms a heterotetramer with a Cas1 homodimer. Requires Mg(2+) as cofactor.

CRISPR (clustered regularly interspaced short palindromic repeat), is an adaptive immune system that provides protection against mobile genetic elements (viruses, transposable elements and conjugative plasmids). CRISPR clusters contain sequences complementary to antecedent mobile elements and target invading nucleic acids. CRISPR clusters are transcribed and processed into CRISPR RNA (crRNA). Functions as a ssRNA-specific endoribonuclease. Involved in the integration of spacer DNA into the CRISPR cassette. The polypeptide is CRISPR-associated endoribonuclease Cas2 (Ligilactobacillus salivarius (strain UCC118) (Lactobacillus salivarius)).